The primary structure comprises 220 residues: Putative threonylcarbamoyl-AMP synthase (220 aa).

The YrdC-like domain occupies 17-202 (ARGIASAVAA…TPRILRAGPV (186 aa)).

Belongs to the SUA5 family.

It localises to the cytoplasm. It catalyses the reaction L-threonine + hydrogencarbonate + ATP = L-threonylcarbamoyladenylate + diphosphate + H2O. In terms of biological role, required for the formation of a threonylcarbamoyl group on adenosine at position 37 (t(6)A37) in tRNAs that read codons beginning with adenine. Catalyzes the conversion of L-threonine, HCO(3)(-)/CO(2) and ATP to give threonylcarbamoyl-AMP (TC-AMP) as the acyladenylate intermediate, with the release of diphosphate. The sequence is that of Putative threonylcarbamoyl-AMP synthase from Mycobacterium leprae (strain TN).